The chain runs to 124 residues: Ribonuclease P protein component 2 (124 aa).

The protein belongs to the eukaryotic/archaeal RNase P protein component 2 family. As to quaternary structure, consists of a catalytic RNA component and at least 4-5 protein subunits.

The protein localises to the cytoplasm. The enzyme catalyses Endonucleolytic cleavage of RNA, removing 5'-extranucleotides from tRNA precursor.. Part of ribonuclease P, a protein complex that generates mature tRNA molecules by cleaving their 5'-ends. The polypeptide is Ribonuclease P protein component 2 (Methanothermobacter thermautotrophicus (strain ATCC 29096 / DSM 1053 / JCM 10044 / NBRC 100330 / Delta H) (Methanobacterium thermoautotrophicum)).